Reading from the N-terminus, the 255-residue chain is Dehydrogenase/reductase SDR family member 11 (255 aa).

An N-terminal signal peptide occupies residues 1–25 (MERWRDRLALVTGASGGIGAAVARA). NADP(+)-binding positions include 13–18 (GASGGI), 38–39 (RT), Glu-44, 65–66 (DL), and Asn-92. Substrate contacts are provided by Ser-146 and Tyr-161. NADP(+) contacts are provided by residues Tyr-161, Lys-165, 196–199 (VETQ), and Lys-203. The active-site Proton acceptor is the Tyr-161.

This sequence belongs to the short-chain dehydrogenases/reductases (SDR) family.

It is found in the secreted. The enzyme catalyses a 3beta-hydroxysteroid + NADP(+) = a 3-oxosteroid + NADPH + H(+). The catalysed reaction is 17beta-estradiol + NAD(+) = estrone + NADH + H(+). It carries out the reaction 17beta-estradiol + NADP(+) = estrone + NADPH + H(+). It participates in steroid biosynthesis; estrogen biosynthesis. Its activity is regulated as follows. Inhibited by flavonoids including apigenin, luteolin, genistein, kaempferol and quercetin and also by carbenoxolone, zearalenone, glycyrrhetinic, curcumin and flufenamic acid. Functionally, catalyzes the conversion of the 17-keto group of estrone, 4- and 5-androstenes and 5-alpha-androstanes into their 17-beta-hydroxyl metabolites and the conversion of the 3-keto group of 3-, 3,17- and 3,20- diketosteroids into their 3-hydroxyl metabolites. Exhibits reductive 3-beta-hydroxysteroid dehydrogenase activity toward 5-beta-androstanes, 5-beta-pregnanes, 4-pregnenes and bile acids. May also reduce endogenous and exogenous alpha-dicarbonyl compounds and xenobiotic alicyclic ketones. The protein is Dehydrogenase/reductase SDR family member 11 (DHRS11) of Bos taurus (Bovine).